Consider the following 511-residue polypeptide: 2-isopropylmalate synthase (511 aa).

A Pyruvate carboxyltransferase domain is found at 6–269 (IIIFDTTLRD…YTDIKCENIF (264 aa)). Mn(2+) is bound by residues D15, H203, H205, and N239. The tract at residues 394–511 (ILEKLSVISG…SLKVEERKMA (118 aa)) is regulatory domain.

It belongs to the alpha-IPM synthase/homocitrate synthase family. LeuA type 1 subfamily. In terms of assembly, homodimer. Requires Mn(2+) as cofactor.

It localises to the cytoplasm. The enzyme catalyses 3-methyl-2-oxobutanoate + acetyl-CoA + H2O = (2S)-2-isopropylmalate + CoA + H(+). The protein operates within amino-acid biosynthesis; L-leucine biosynthesis; L-leucine from 3-methyl-2-oxobutanoate: step 1/4. In terms of biological role, catalyzes the condensation of the acetyl group of acetyl-CoA with 3-methyl-2-oxobutanoate (2-ketoisovalerate) to form 3-carboxy-3-hydroxy-4-methylpentanoate (2-isopropylmalate). This chain is 2-isopropylmalate synthase, found in Campylobacter jejuni subsp. jejuni serotype O:6 (strain 81116 / NCTC 11828).